Consider the following 112-residue polypeptide: Large ribosomal subunit protein eL30 (112 aa).

The protein belongs to the eukaryotic ribosomal protein eL30 family.

This is Large ribosomal subunit protein eL30 (RPL30) from Lupinus luteus (European yellow lupine).